We begin with the raw amino-acid sequence, 147 residues long: MSFTDKQEALVNSSWEAFKQNLPRYSVFFYTVVLEKAPAAKGLFSFLKNSAEVQDSPQLQAHAEKVFGLVRDSAVQLRATGGVVLGDATLGAIHVRKGVVDPHFVVVKEALLKTIKEAAGDKWSEELNTAWEVAYDALATAIKKAMS.

Residues 2–147 (SFTDKQEALV…LATAIKKAMS (146 aa)) enclose the Globin domain. Nitrated tyrosine occurs at positions 25 and 30. Ser-45 contributes to the heme b binding site. Ser-45 carries the phosphoserine modification. An O2-binding site is contributed by His-62. Heme b-binding residues include Lys-65, His-94, and Lys-97. At Tyr-135 the chain carries Nitrated tyrosine.

This sequence belongs to the plant globin family. As to quaternary structure, monomer. Nitrated in effective nodules and particularly in hypoxic conditions; this mechanism may play a protective role in the symbiosis by buffering toxic peroxynitrite NO(2)(-). Nitration level decrease during nodule senescence. Post-translationally, phosphorylation at Ser-45 disrupts the molecular environment of its porphyrin ring oxygen binding pocket, thus leading to a reduced oxygen consumption and to the delivery of oxygen O(2) to symbiosomes. As to expression, root nodules.

It localises to the cytoplasm. The protein resides in the cytosol. It is found in the nucleus. Leghemoglobin that reversibly binds oxygen O(2) through a pentacoordinated heme iron. In root nodules, facilitates the diffusion of oxygen to the bacteroids while preventing the bacterial nitrogenase from being inactivated by buffering dioxygen, nitric oxide and carbon monoxide, and promoting the formation of reactive oxygen species (ROS, e.g. H(2)O(2)). This role is essential for symbiotic nitrogen fixation (SNF). The chain is Leghemoglobin-1 from Medicago sativa (Alfalfa).